The primary structure comprises 146 residues: uncharacterized protein (146 aa).

This is an uncharacterized protein from Acanthamoeba polyphaga mimivirus (APMV).